A 397-amino-acid polypeptide reads, in one-letter code: Tryptophan synthase beta chain (397 aa).

Lysine 88 is modified (N6-(pyridoxal phosphate)lysine).

This sequence belongs to the TrpB family. As to quaternary structure, tetramer of two alpha and two beta chains. Pyridoxal 5'-phosphate serves as cofactor.

It catalyses the reaction (1S,2R)-1-C-(indol-3-yl)glycerol 3-phosphate + L-serine = D-glyceraldehyde 3-phosphate + L-tryptophan + H2O. It participates in amino-acid biosynthesis; L-tryptophan biosynthesis; L-tryptophan from chorismate: step 5/5. In terms of biological role, the beta subunit is responsible for the synthesis of L-tryptophan from indole and L-serine. The polypeptide is Tryptophan synthase beta chain (Haemophilus influenzae (strain 86-028NP)).